Consider the following 69-residue polypeptide: Small, acid-soluble spore protein I (69 aa).

It belongs to the SspI family.

The protein localises to the spore core. This is Small, acid-soluble spore protein I from Shouchella clausii (strain KSM-K16) (Alkalihalobacillus clausii).